The primary structure comprises 359 residues: Histamine H2 receptor (359 aa).

The Extracellular portion of the chain corresponds to 1–22 (MAFNGTVPSFCMDFTVYKVTIS). N-linked (GlcNAc...) asparagine glycosylation is present at Asn4. A helical transmembrane segment spans residues 23–44 (VILIILILVTVAGNVVVCLAVG). Residues 45–57 (LNRRLRSLTNCFI) are Cytoplasmic-facing. A helical transmembrane segment spans residues 58–81 (VSLAVTDLLLGLLVLPFSAIYQLS). Topologically, residues 82-92 (CKWSFSKVFCN) are extracellular. The cysteines at positions 91 and 174 are disulfide-linked. Residues 93–114 (IYTSLDVMLCTASILNLFMISL) form a helical membrane-spanning segment. Topologically, residues 115–134 (DRYCAVTDPLRYPVLITPAR) are cytoplasmic. The chain crosses the membrane as a helical span at residues 135–159 (VAISLVFIWVISITLSFLSIHLGWN). At 160–180 (SRNETSKDNDTIVKCKVQVNE) the chain is on the extracellular side. The chain crosses the membrane as a helical span at residues 181 to 204 (VYGLVDGLVTFYLPLLIMCITYFR). The Cytoplasmic portion of the chain corresponds to 205–234 (IFKIAREQARRINHIGSWKAATIREHKATV). Residues 235–258 (TLAAVMGAFIICWFPYFTVFVYRG) traverse the membrane as a helical segment. The Extracellular segment spans residues 259–267 (LKGDDAVNE). A helical transmembrane segment spans residues 268–289 (VFEDVVLWLGYANSALNPILYA). Residues 290–359 (ALNRDFRTAY…VTAPQGATNR (70 aa)) are Cytoplasmic-facing. A lipid anchor (S-palmitoyl cysteine) is attached at Cys305.

The protein belongs to the G-protein coupled receptor 1 family.

It localises to the cell membrane. Its function is as follows. The H2 subclass of histamine receptors mediates gastric acid secretion. The activity of this receptor is mediated by G proteins which activate adenylyl cyclase. This Cavia porcellus (Guinea pig) protein is Histamine H2 receptor (HRH2).